The primary structure comprises 242 residues: MRVDNTASHQNVDEQEIAKFEAVASRWWDLEGEFKPLHRINPLRLDYILQRSGGIFDKKVLDVGCGGGILAESMAREGAQVTGLDMGYEPLQVARLHALETGTKLDYVQETVESHAQKHPQYYDVVTCMEMLEHVPDPASVIRACAQLVKPDGHVFFSTINRNTKSWLMAVVGAEYVLKMVPKGTHDAKKFIRPSELIGWVDQTPLRERHIIGLHYNPITDHFKLGRNVDVNYMVHTQRDEA.

S-adenosyl-L-methionine is bound by residues R44, G64, D85, and M129.

Belongs to the methyltransferase superfamily. UbiG/COQ3 family.

The enzyme catalyses a 3-demethylubiquinol + S-adenosyl-L-methionine = a ubiquinol + S-adenosyl-L-homocysteine + H(+). It catalyses the reaction a 3-(all-trans-polyprenyl)benzene-1,2-diol + S-adenosyl-L-methionine = a 2-methoxy-6-(all-trans-polyprenyl)phenol + S-adenosyl-L-homocysteine + H(+). It participates in cofactor biosynthesis; ubiquinone biosynthesis. In terms of biological role, O-methyltransferase that catalyzes the 2 O-methylation steps in the ubiquinone biosynthetic pathway. The polypeptide is Ubiquinone biosynthesis O-methyltransferase (Yersinia enterocolitica serotype O:8 / biotype 1B (strain NCTC 13174 / 8081)).